A 203-amino-acid chain; its full sequence is Dephospho-CoA kinase (203 aa).

The region spanning 3 to 201 is the DPCK domain; sequence SVGLTGGIGS…QRYLGYAAAA (199 aa). 11 to 16 lines the ATP pocket; the sequence is GSGKTT.

It belongs to the CoaE family.

The protein localises to the cytoplasm. The enzyme catalyses 3'-dephospho-CoA + ATP = ADP + CoA + H(+). Its pathway is cofactor biosynthesis; coenzyme A biosynthesis; CoA from (R)-pantothenate: step 5/5. In terms of biological role, catalyzes the phosphorylation of the 3'-hydroxyl group of dephosphocoenzyme A to form coenzyme A. This Burkholderia thailandensis (strain ATCC 700388 / DSM 13276 / CCUG 48851 / CIP 106301 / E264) protein is Dephospho-CoA kinase.